A 154-amino-acid polypeptide reads, in one-letter code: Putative lipoprotein MAB_4074c (154 aa).

The N-terminal stretch at M1–G21 is a signal peptide. The N-palmitoyl cysteine moiety is linked to residue C22. C22 is lipidated: S-diacylglycerol cysteine.

It belongs to the mycobacterial 19 kDa antigen family.

It is found in the cell membrane. In Mycobacteroides abscessus (strain ATCC 19977 / DSM 44196 / CCUG 20993 / CIP 104536 / JCM 13569 / NCTC 13031 / TMC 1543 / L948) (Mycobacterium abscessus), this protein is Putative lipoprotein MAB_4074c.